Consider the following 666-residue polypeptide: uncharacterized protein (666 aa).

One can recognise an RNB domain in the interval 263 to 553 (RFDLTTLKTY…THFQMKAYLR (291 aa)).

It belongs to the RNR ribonuclease family.

This is an uncharacterized protein from Synechocystis sp. (strain ATCC 27184 / PCC 6803 / Kazusa).